The following is a 377-amino-acid chain: UPF0754 membrane protein GK0639 (377 aa).

2 helical membrane passes run Leu7 to Val27 and Tyr357 to Leu377.

This sequence belongs to the UPF0754 family.

Its subcellular location is the cell membrane. The sequence is that of UPF0754 membrane protein GK0639 from Geobacillus kaustophilus (strain HTA426).